The primary structure comprises 94 residues: Selenoprotein K (94 aa).

The chain crosses the membrane as a helical span at residues 20–42 (LSLITDFFWGIAEFVVLFFKTLL). A disordered region spans residues 48 to 94 (KRRSYGNSSDSRYDDGRGPPGNPPRRMGRINHLRGPSPPPMAGGUGR). Residue Sec92 is a non-standard amino acid, selenocysteine.

It belongs to the selenoprotein K family. In terms of assembly, interacts with DERL1, DERL2, DERL3 and SELENOS. The SELENOK-SELENOS complex interacts with VCP. Interacts with ZDHHC6. Cleaved by CAPN2/m-calpain in resting macrophages but not in activated macrophages. Macrophage activation up-regulates expression of the calpain inhibitor CAST/calpastatin, resulting in inhibition of CAPN2 activity. Post-translationally, truncated SELENOK proteins produced by failed UGA/Sec decoding are ubiquitinated by the CRL2(KLHDC2) complex, which recognizes the diglycine (Gly-Gly) at the C-terminus of truncated SELENOK proteins. In terms of tissue distribution, highly expressed in heart.

It is found in the endoplasmic reticulum membrane. The protein localises to the cell membrane. Required for Ca(2+) flux in immune cells and plays a role in T-cell proliferation and in T-cell and neutrophil migration. Involved in endoplasmic reticulum-associated degradation (ERAD) of soluble glycosylated proteins. Required for palmitoylation and cell surface expression of CD36 and involved in macrophage uptake of low-density lipoprotein and in foam cell formation. Together with ZDHHC6, required for palmitoylation of ITPR1 in immune cells, leading to regulate ITPR1 stability and function. Plays a role in protection of cells from ER stress-induced apoptosis. Protects cells from oxidative stress when overexpressed in cardiomyocytes. In Homo sapiens (Human), this protein is Selenoprotein K.